A 723-amino-acid chain; its full sequence is Pentatricopeptide repeat-containing protein At5g50280, chloroplastic (723 aa).

Residues 1–44 constitute a chloroplast transit peptide; the sequence is MSMASSSLATQSFFSSFPLSHRLHFPVPYLLLRSSFFRKPLSLS. Residues 70–97 are disordered; sequence IQQPENSTINSEESECEEEDDEEGDDFT. Residues 81–97 are compositionally biased toward acidic residues; sequence EESECEEEDDEEGDDFT. PPR repeat units lie at residues 272 to 306, 307 to 342, 343 to 377, 378 to 412, 413 to 447, 448 to 483, 484 to 518, 519 to 553, 554 to 588, 589 to 623, and 624 to 658; these read DVRL…NVYP, DNVT…GVKW, SQDV…GIRS, NTIV…GLKP, SAAT…GLEP, NVKS…GLKP, SSHS…GIKP, SVET…KIKG, TRIT…GLQP, SVMT…NLKP, and DSIT…GQVP. Residues 700 to 723 form a disordered region; that stretch reads TKGKKDEFWKYKTNRTTSPGRHRS. Over residues 713 to 723 the composition is skewed to polar residues; the sequence is NRTTSPGRHRS.

The protein belongs to the PPR family. P subfamily.

It is found in the plastid. It localises to the chloroplast. In Arabidopsis thaliana (Mouse-ear cress), this protein is Pentatricopeptide repeat-containing protein At5g50280, chloroplastic (EMB1006).